The primary structure comprises 259 residues: 14-3-3-like protein (259 aa).

The protein belongs to the 14-3-3 family.

The sequence is that of 14-3-3-like protein from Helianthus annuus (Common sunflower).